Consider the following 672-residue polypeptide: DNA ligase (672 aa).

NAD(+)-binding positions include 32-36, 81-82, and Glu113; these read DAEYD and SL. The active-site N6-AMP-lysine intermediate is the Lys115. Residues Arg136, Glu173, Lys290, and Lys314 each coordinate NAD(+). Positions 408, 411, 426, and 432 each coordinate Zn(2+). One can recognise a BRCT domain in the interval 592–672; that stretch reads EIDSPFAGKT…EMIRLLGESS (81 aa).

It belongs to the NAD-dependent DNA ligase family. LigA subfamily. Mg(2+) serves as cofactor. The cofactor is Mn(2+).

It carries out the reaction NAD(+) + (deoxyribonucleotide)n-3'-hydroxyl + 5'-phospho-(deoxyribonucleotide)m = (deoxyribonucleotide)n+m + AMP + beta-nicotinamide D-nucleotide.. Its function is as follows. DNA ligase that catalyzes the formation of phosphodiester linkages between 5'-phosphoryl and 3'-hydroxyl groups in double-stranded DNA using NAD as a coenzyme and as the energy source for the reaction. It is essential for DNA replication and repair of damaged DNA. This chain is DNA ligase, found in Yersinia enterocolitica serotype O:8 / biotype 1B (strain NCTC 13174 / 8081).